We begin with the raw amino-acid sequence, 236 residues long: Cytochrome b-c1 complex subunit Rieske-4, mitochondrial (236 aa).

A mitochondrion-targeting transit peptide spans 1–24 (MINFGSCWGLASVTSNSFSIISGF). Residues 25–73 (SSNSVSHAHDMGLVPDLPPTVAAIKNPTSKIVYDEHNHERYPPGDPSKR) are Mitochondrial matrix-facing. Residues 74–96 (AFAYFVLTGGRFVYASLVRLLIL) form a helical membrane-spanning segment. Residues 97 to 236 (KFVLSMSASK…FLEENKLLIG (140 aa)) lie on the Mitochondrial intermembrane side of the membrane. Positions 146–234 (INLANSVDLG…YSFLEENKLL (89 aa)) constitute a Rieske domain. Residues C179, H181, C198, and H201 each coordinate [2Fe-2S] cluster. C184 and C200 are oxidised to a cystine.

It belongs to the Rieske iron-sulfur protein family. Component of the ubiquinol-cytochrome c oxidoreductase (cytochrome b-c1 complex, complex III, CIII), a multisubunit enzyme composed of 3 respiratory subunits cytochrome b, cytochrome c1 and Rieske protein, 2 core protein subunits, and several low-molecular weight protein subunits. The complex exists as an obligatory dimer and forms supercomplexes (SCs) in the inner mitochondrial membrane with cytochrome c oxidase (complex IV, CIV). [2Fe-2S] cluster serves as cofactor.

It localises to the mitochondrion inner membrane. The catalysed reaction is a quinol + 2 Fe(III)-[cytochrome c](out) = a quinone + 2 Fe(II)-[cytochrome c](out) + 2 H(+)(out). Functionally, component of the ubiquinol-cytochrome c oxidoreductase, a multisubunit transmembrane complex that is part of the mitochondrial electron transport chain which drives oxidative phosphorylation. The respiratory chain contains 3 multisubunit complexes succinate dehydrogenase (complex II, CII), ubiquinol-cytochrome c oxidoreductase (cytochrome b-c1 complex, complex III, CIII) and cytochrome c oxidase (complex IV, CIV), that cooperate to transfer electrons derived from NADH and succinate to molecular oxygen, creating an electrochemical gradient over the inner membrane that drives transmembrane transport and the ATP synthase. The cytochrome b-c1 complex catalyzes electron transfer from ubiquinol to cytochrome c, linking this redox reaction to translocation of protons across the mitochondrial inner membrane, with protons being carried across the membrane as hydrogens on the quinol. In the process called Q cycle, 2 protons are consumed from the matrix, 4 protons are released into the intermembrane space and 2 electrons are passed to cytochrome c. The Rieske protein is a catalytic core subunit containing a [2Fe-2S] iron-sulfur cluster. It cycles between 2 conformational states during catalysis to transfer electrons from the quinol bound in the Q(0) site in cytochrome b to cytochrome c1. In Nicotiana tabacum (Common tobacco), this protein is Cytochrome b-c1 complex subunit Rieske-4, mitochondrial.